Consider the following 252-residue polypeptide: MGVTILQPYPLPEGKSGAHIIDQLSKRLLALGATHAGQFLVDCETFISTPQPHNGAPGRAVHVLHNSEYPASTFSIIDNGTGKQVAIVADNIFDLLMLKMTNTFTSKKQTKIESRGARFEYGDFVIKLGSVTMMEHFKGILIEIEYKSCVILAYCWEMIREMLQGFLGIAVNKDFPSYFAPQTIMTAMGQQQLHAKHNDIFEPMDTVKQYLEQFTNYRKHVTLMGGMGSGPGSQQVGPNVHMSPAVAGLHRS.

This sequence belongs to the Mediator complex subunit 20 family. As to quaternary structure, component of the Mediator complex, which includes at least CDK8, MED4, MED6, MED11, MED14, MED17, MED18, MED20, MED21, MED22, MED27, MED28, MED30 and MED31.

It localises to the nucleus. Component of the Mediator complex, a coactivator involved in the regulated transcription of nearly all RNA polymerase II-dependent genes. Mediator functions as a bridge to convey information from gene-specific regulatory proteins to the basal RNA polymerase II transcription machinery. Mediator is recruited to promoters by direct interactions with regulatory proteins and serves as a scaffold for the assembly of a functional preinitiation complex with RNA polymerase II and the general transcription factors. Required for activated transcription of the MtnA gene. This chain is Mediator of RNA polymerase II transcription subunit 20 (MED20), found in Drosophila melanogaster (Fruit fly).